Reading from the N-terminus, the 351-residue chain is Mannonate dehydratase (351 aa).

Belongs to the mannonate dehydratase family. The cofactor is Fe(2+). Mn(2+) serves as cofactor.

It carries out the reaction D-mannonate = 2-dehydro-3-deoxy-D-gluconate + H2O. The protein operates within carbohydrate metabolism; pentose and glucuronate interconversion. Catalyzes the dehydration of D-mannonate. This is Mannonate dehydratase from Clostridium acetobutylicum (strain ATCC 824 / DSM 792 / JCM 1419 / IAM 19013 / LMG 5710 / NBRC 13948 / NRRL B-527 / VKM B-1787 / 2291 / W).